A 181-amino-acid chain; its full sequence is ATP synthase subunit delta (181 aa).

The protein belongs to the ATPase delta chain family. In terms of assembly, F-type ATPases have 2 components, F(1) - the catalytic core - and F(0) - the membrane proton channel. F(1) has five subunits: alpha(3), beta(3), gamma(1), delta(1), epsilon(1). F(0) has three main subunits: a(1), b(2) and c(10-14). The alpha and beta chains form an alternating ring which encloses part of the gamma chain. F(1) is attached to F(0) by a central stalk formed by the gamma and epsilon chains, while a peripheral stalk is formed by the delta and b chains.

Its subcellular location is the cell inner membrane. Its function is as follows. F(1)F(0) ATP synthase produces ATP from ADP in the presence of a proton or sodium gradient. F-type ATPases consist of two structural domains, F(1) containing the extramembraneous catalytic core and F(0) containing the membrane proton channel, linked together by a central stalk and a peripheral stalk. During catalysis, ATP synthesis in the catalytic domain of F(1) is coupled via a rotary mechanism of the central stalk subunits to proton translocation. This protein is part of the stalk that links CF(0) to CF(1). It either transmits conformational changes from CF(0) to CF(1) or is implicated in proton conduction. This Syntrophus aciditrophicus (strain SB) protein is ATP synthase subunit delta.